A 371-amino-acid polypeptide reads, in one-letter code: Ecto-ADP-ribosyltransferase 3 (371 aa).

A signal peptide spans 1–26 (MKMGHFEMVTTLLAAAVLMDIFQVKA). A disulfide bridge links Cys43 with Cys255. One can recognise a TR mART core domain in the interval 64–250 (ALLRMVWDNA…LVLQSINSTC (187 aa)). Residues Tyr101 and Asn182 each coordinate NAD(+). The segment at 306-346 (VLQTEENPLLPDEKPDRSRGKANNPTPGLVPGPKSHPSASS) is disordered. Ser345 is lipidated: GPI-anchor amidated serine. Residues 346 to 371 (SGNTLLPSVMASTILLVASAVNFIEL) constitute a propeptide, removed in mature form.

The protein belongs to the Arg-specific ADP-ribosyltransferase family.

Its subcellular location is the cell membrane. The enzyme catalyses L-arginyl-[protein] + NAD(+) = N(omega)-(ADP-D-ribosyl)-L-arginyl-[protein] + nicotinamide + H(+). This is Ecto-ADP-ribosyltransferase 3 (Art3) from Mus musculus (Mouse).